We begin with the raw amino-acid sequence, 203 residues long: ATP-dependent Clp protease proteolytic subunit (203 aa).

Ser-107 functions as the Nucleophile in the catalytic mechanism. His-132 is an active-site residue.

The protein belongs to the peptidase S14 family. In terms of assembly, fourteen ClpP subunits assemble into 2 heptameric rings which stack back to back to give a disk-like structure with a central cavity, resembling the structure of eukaryotic proteasomes.

It is found in the cytoplasm. It carries out the reaction Hydrolysis of proteins to small peptides in the presence of ATP and magnesium. alpha-casein is the usual test substrate. In the absence of ATP, only oligopeptides shorter than five residues are hydrolyzed (such as succinyl-Leu-Tyr-|-NHMec, and Leu-Tyr-Leu-|-Tyr-Trp, in which cleavage of the -Tyr-|-Leu- and -Tyr-|-Trp bonds also occurs).. Functionally, cleaves peptides in various proteins in a process that requires ATP hydrolysis. Has a chymotrypsin-like activity. Plays a major role in the degradation of misfolded proteins. The polypeptide is ATP-dependent Clp protease proteolytic subunit (Shewanella frigidimarina (strain NCIMB 400)).